The primary structure comprises 320 residues: Aspartate carbamoyltransferase catalytic subunit (320 aa).

The carbamoyl phosphate site is built by R68 and T69. An L-aspartate-binding site is contributed by K96. Residues R118, H148, and Q151 each contribute to the carbamoyl phosphate site. Residues R181 and R236 each coordinate L-aspartate. Carbamoyl phosphate is bound by residues G277 and P278.

The protein belongs to the aspartate/ornithine carbamoyltransferase superfamily. ATCase family. Heterododecamer (2C3:3R2) of six catalytic PyrB chains organized as two trimers (C3), and six regulatory PyrI chains organized as three dimers (R2).

It carries out the reaction carbamoyl phosphate + L-aspartate = N-carbamoyl-L-aspartate + phosphate + H(+). The protein operates within pyrimidine metabolism; UMP biosynthesis via de novo pathway; (S)-dihydroorotate from bicarbonate: step 2/3. In terms of biological role, catalyzes the condensation of carbamoyl phosphate and aspartate to form carbamoyl aspartate and inorganic phosphate, the committed step in the de novo pyrimidine nucleotide biosynthesis pathway. The chain is Aspartate carbamoyltransferase catalytic subunit from Acidovorax ebreus (strain TPSY) (Diaphorobacter sp. (strain TPSY)).